The primary structure comprises 155 residues: Ribosomal RNA large subunit methyltransferase H (155 aa).

S-adenosyl-L-methionine-binding positions include Leu-73, Gly-104, and 123–128; that span reads LSPLTL.

It belongs to the RNA methyltransferase RlmH family. As to quaternary structure, homodimer.

The protein localises to the cytoplasm. It catalyses the reaction pseudouridine(1915) in 23S rRNA + S-adenosyl-L-methionine = N(3)-methylpseudouridine(1915) in 23S rRNA + S-adenosyl-L-homocysteine + H(+). Its function is as follows. Specifically methylates the pseudouridine at position 1915 (m3Psi1915) in 23S rRNA. The chain is Ribosomal RNA large subunit methyltransferase H from Ectopseudomonas mendocina (strain ymp) (Pseudomonas mendocina).